The sequence spans 155 residues: Aspartate carbamoyltransferase regulatory chain (155 aa).

The Zn(2+) site is built by Cys113, Cys118, Cys139, and Cys142.

This sequence belongs to the PyrI family. Contains catalytic and regulatory chains. Zn(2+) serves as cofactor.

Involved in allosteric regulation of aspartate carbamoyltransferase. This Methanospirillum hungatei JF-1 (strain ATCC 27890 / DSM 864 / NBRC 100397 / JF-1) protein is Aspartate carbamoyltransferase regulatory chain.